The chain runs to 957 residues: Nitrite reductase [NAD(P)H] large subunit (957 aa).

44–79 serves as a coordination point for FAD; it reads YDRVHLTEYFAGRSAESLSLVEGDFFTQHGIELRLS. 193 to 225 serves as a coordination point for NAD(+); that stretch reads LREKISELGVGVHTSKATTEIVRNEQGLQLNFR. [2Fe-2S] cluster is bound by residues Cys-423, Cys-425, Cys-457, and Cys-460. Residues Cys-639, Cys-645, Cys-679, and Cys-683 each coordinate [4Fe-4S] cluster. Cys-683 provides a ligand contact to siroheme.

The protein belongs to the nitrite and sulfite reductase 4Fe-4S domain family. In terms of assembly, homodimer which associates with NirD. It depends on siroheme as a cofactor. [2Fe-2S] cluster serves as cofactor. The cofactor is [4Fe-4S] cluster. FAD is required as a cofactor.

The enzyme catalyses NH4(+) + 3 NADP(+) + 2 H2O = nitrite + 3 NADPH + 5 H(+). The catalysed reaction is NH4(+) + 3 NAD(+) + 2 H2O = nitrite + 3 NADH + 5 H(+). It participates in nitrogen metabolism; nitrate reduction (assimilation). This is Nitrite reductase [NAD(P)H] large subunit (nasB) from Klebsiella oxytoca.